A 585-amino-acid chain; its full sequence is Zinc finger protein Eos (585 aa).

Disordered stretches follow at residues 1–43 (MHTP…PDFL) and 68–98 (EKEF…SANS). Residues 25–34 (QGKDNLERDP) are compositionally biased toward basic and acidic residues. The span at 79–98 (SVSTPNSQHSSPSRSLSANS) shows a compositional bias: polar residues. Lysine 100 is covalently cross-linked (Glycyl lysine isopeptide (Lys-Gly) (interchain with G-Cter in SUMO2)). Serine 105 is subject to Phosphoserine. C2H2-type zinc fingers lie at residues 159 to 181 (LKCD…KRSH), 187 to 209 (FHCN…IKLH), 215 to 237 (FKCP…LRTH), and 248 to 271 (YKCN…ERCH). The interval 281–585 (AQALAGQPGD…HIVRGEHKVG (305 aa)) is interaction with FOXP3. Residue lysine 335 is modified to N6-acetyllysine. The segment at 410–489 (PGRLELPGSR…QPPPTIVVGR (80 aa)) is disordered. A CTBP-binding motif PEDLA motif is present at residues 425–429 (PEDLA). The span at 475–484 (QGPPPQPPPT) shows a compositional bias: pro residues. A Glycyl lysine isopeptide (Lys-Gly) (interchain with G-Cter in SUMO2) cross-link involves residue lysine 500. C2H2-type zinc fingers lie at residues 530–552 (FKCE…MGCH) and 558–582 (FECN…RGEH).

This sequence belongs to the Ikaros C2H2-type zinc-finger protein family. As to quaternary structure, self-associates. Interacts with other family members; IKZF1, IKZF2, IKZF3 and IKZF5. Interacts with CTBP2. Interacts with SPI1, MITF, FOXP3 and CTBP1. In terms of tissue distribution, highly expressed in skeletal muscle, low levels of expression in heart, thymus, kidney, liver, and spleen. Expressed in the hematopoietic cell lines MOLT-4, NALM-6 and K-562. Highly expressed in THP-1 and M-07e cell lines, which have characteristics of myeloid and early megakaryocytic cells respectively.

It localises to the nucleus. Functionally, DNA-binding protein that binds to the 5'GGGAATRCC-3' Ikaros-binding sequence. Transcriptional repressor. Interacts with SPI1 and MITF to repress transcription of the CTSK and ACP5 promoters via recruitment of corepressors SIN3A and CTBP2. May be involved in the development of central and peripheral nervous systems. Essential for the inhibitory function of regulatory T-cells (Treg). Mediates FOXP3-mediated gene silencing in regulatory T-cells (Treg) via recruitment of corepressor CTBP1. The sequence is that of Zinc finger protein Eos (IKZF4) from Homo sapiens (Human).